Here is a 546-residue protein sequence, read N- to C-terminus: DDB1- and CUL4-associated factor 11 (546 aa).

Residues 1–10 (MGSRNSSSAG) show a composition bias toward polar residues. A disordered region spans residues 1 to 40 (MGSRNSSSAGTGSGDPSEGLPRRGAGLRRSEEEEEEDEDV). Residues Ser73 and Ser75 each carry the phosphoserine modification. The segment at 79 to 100 (HDSAWDGRLGDRYNPPVDATPD) is disordered. Positions 80–89 (DSAWDGRLGD) are enriched in basic and acidic residues. 7 WD repeats span residues 170–210 (TYSQ…RKFK), 216–258 (DVGW…TALD), 263–302 (ERRFAVFSIAVSSDGREVLGGANDGCLYVFDREQNRRTLQ), 305–345 (SHED…EDDP), 353–392 (GHQDGITFIDSKGDARYLISNSKDQTIKLWDIRRFSSREG), 435–480 (GVLH…KKLT), and 481–520 (THKACVRDVSWHPFEEKIVSSSWDGNLRLWQYRQAEYFQD). A disordered region spans residues 521–546 (DMPESEEHPSTPAPMSHPSTAFSSPQ). The segment covering 537-546 (HPSTAFSSPQ) has biased composition (polar residues).

Interacts with DDB1 and CUL4A.

It participates in protein modification; protein ubiquitination. Functionally, may function as a substrate receptor for CUL4-DDB1 E3 ubiquitin-protein ligase complex. This is DDB1- and CUL4-associated factor 11 (DCAF11) from Bos taurus (Bovine).